A 92-amino-acid polypeptide reads, in one-letter code: Sec-independent protein translocase protein TatA (92 aa).

A helical membrane pass occupies residues 1-21; that stretch reads MGIFDWKHWIVILVVVVLVFG. Residues 44 to 92 are disordered; sequence NDDEKPADPVVNPVPPAQPVHPQATQPITERRTFDVQAEKVEEPTRKDS. Positions 72-92 are enriched in basic and acidic residues; it reads TERRTFDVQAEKVEEPTRKDS.

This sequence belongs to the TatA/E family. The Tat system comprises two distinct complexes: a TatABC complex, containing multiple copies of TatA, TatB and TatC subunits, and a separate TatA complex, containing only TatA subunits. Substrates initially bind to the TatABC complex, which probably triggers association of the separate TatA complex to form the active translocon.

The protein localises to the cell inner membrane. Part of the twin-arginine translocation (Tat) system that transports large folded proteins containing a characteristic twin-arginine motif in their signal peptide across membranes. TatA could form the protein-conducting channel of the Tat system. This chain is Sec-independent protein translocase protein TatA, found in Pseudomonas fluorescens (strain SBW25).